The sequence spans 383 residues: Cytochrome b (383 aa).

The next 4 helical transmembrane spans lie at 32 to 52 (FGSLLAVCLVIQILTGCFLAM), 76 to 98 (WLIRYTHANVASFFFIFVYCHIA), 113 to 133 (TWSIGVIILILMMAIAFLGYV), and 179 to 199 (FFSLHYILPFLLAALAVAHMI). Positions 82 and 96 each coordinate heme b. Heme b contacts are provided by His183 and His197. His202 is an a ubiquinone binding site. 4 consecutive transmembrane segments (helical) span residues 225–245 (FIFKDLVTIFAFLLVLSIFVC), 289–309 (LLGVIAMFGSLLILLVLPLTD), 321–341 (LMKLSFWFFVVDFIILMWIGA), and 348–368 (YLEVGQIATAFYFAWFVFIVP).

The protein belongs to the cytochrome b family. In terms of assembly, fungal cytochrome b-c1 complex contains 10 subunits; 3 respiratory subunits, 2 core proteins and 5 low-molecular weight proteins. Cytochrome b-c1 complex is a homodimer. The cofactor is heme b.

It is found in the mitochondrion inner membrane. Functionally, component of the ubiquinol-cytochrome c reductase complex (complex III or cytochrome b-c1 complex) that is part of the mitochondrial respiratory chain. The b-c1 complex mediates electron transfer from ubiquinol to cytochrome c. Contributes to the generation of a proton gradient across the mitochondrial membrane that is then used for ATP synthesis. The chain is Cytochrome b (cob) from Schizophyllum commune (Split gill fungus).